We begin with the raw amino-acid sequence, 443 residues long: Serine/threonine-protein phosphatase 2A 55 kDa regulatory subunit B beta isoform (443 aa).

WD repeat units lie at residues 22–61, 87–128, 171–209, 220–260, 279–317, 334–375, and 410–443; these read TEADIISTVEFNSTGELLATGDKGGRVVIFQREQENKNQP, EIEE…KRPE, AHTYHINSISVNSDYETYMSADDLRINLWNLEITNRSFN, ELTE…LCDR, EIISSISDVKFNHSGRYIMTRDYLTVKVWDLNMENRPIE, ENDC…DVTL, and DFSKKILHTAWHPSENIIAVAATNNLYIFQDKVN.

This sequence belongs to the phosphatase 2A regulatory subunit B family. As to quaternary structure, PP2A consists of a common heterodimeric core enzyme, composed of a 36 kDa catalytic subunit (subunit C) and a 65 kDa constant regulatory subunit (PR65 or subunit A), that associates with a variety of regulatory subunits.

The protein resides in the cytoplasm. It localises to the cytoskeleton. The protein localises to the membrane. The B regulatory subunit might modulate substrate selectivity and catalytic activity, and might also direct the localization of the catalytic enzyme to a particular subcellular compartment. Negatively controls the initiation of oocyte maturation. This Xenopus tropicalis (Western clawed frog) protein is Serine/threonine-protein phosphatase 2A 55 kDa regulatory subunit B beta isoform (ppp2r2b).